The sequence spans 329 residues: Alpha-tubulin N-acetyltransferase 1 (329 aa).

Residues S5–F185 enclose the N-acetyltransferase domain. Acetyl-CoA contacts are provided by residues F119–K132 and S155–K164. 2 disordered regions span residues P218–K261 and G306–H329. Over residues Y220–N229 the composition is skewed to polar residues. The segment covering T238–V249 has biased composition (pro residues). Polar residues predominate over residues P313 to H329.

This sequence belongs to the acetyltransferase ATAT1 family.

It carries out the reaction L-lysyl-[alpha-tubulin] + acetyl-CoA = N(6)-acetyl-L-lysyl-[alpha-tubulin] + CoA + H(+). Specifically acetylates 'Lys-40' in alpha-tubulin on the lumenal side of microtubules. Promotes microtubule destabilization and accelerates microtubule dynamics; this activity may be independent of acetylation activity. Acetylates alpha-tubulin with a slow enzymatic rate, due to a catalytic site that is not optimized for acetyl transfer. Enters the microtubule through each end and diffuses quickly throughout the lumen of microtubules. Acetylates only long/old microtubules because of its slow acetylation rate since it does not have time to act on dynamically unstable microtubules before the enzyme is released. The polypeptide is Alpha-tubulin N-acetyltransferase 1 (Trypanosoma cruzi (strain CL Brener)).